Here is a 310-residue protein sequence, read N- to C-terminus: uncharacterized protein (310 aa).

Residues aspartate 269 to lysine 307 are a coiled coil. The span at lysine 290–lysine 304 shows a compositional bias: basic and acidic residues. A disordered region spans residues lysine 290–lysine 310.

This is an uncharacterized protein from Magallana gigas (Pacific oyster).